Reading from the N-terminus, the 848-residue chain is Aryl hydrocarbon receptor (848 aa).

The propeptide occupies 1 to 9; that stretch reads MSSGANITY. A disordered region spans residues 1–38; the sequence is MSSGANITYASRKRRKPVQKTVKPIPAEGIKSNPSKRH. 2 short sequence motifs (nuclear localization signal) span residues 12 to 15 and 36 to 41; these read RKRR and KRHRDR. A bHLH domain is found at 26 to 79; sequence PAEGIKSNPSKRHRDRLNTELDRLASLLPFPQDVINKLDKLSVLRLSVSYLRAK. Positions 37–65 are DNA-binding; the sequence is RHRDRLNTELDRLASLLPFPQDVINKLDK. 3 required for maintaining the overall integrity of the AHR:ARNT heterodimer and its transcriptional activity regions span residues 49–81, 116–124, and 260–262; these read LASLLPFPQDVINKLDKLSVLRLSVSYLRAKSF, LLQALNGFV, and FAI. The Nuclear export signal motif lies at 63 to 71; that stretch reads LDKLSVLRL. Positions 111 to 175 constitute a PAS 1 domain; sequence QEGEFLLQAL…AEFQRQLHWA (65 aa). The region spanning 266–336 is the PAS 2 domain; sequence LQPPSILEIR…CAESHIRMIK (71 aa). The PAC domain maps to 342 to 383; that stretch reads MTVFRLLAKHSRWRWVQSNARLIYRNGRPDYIIVTQRPLTDE. The segment at 421 to 449 is disordered; that stretch reads LPIRTKSNTSRKDWAPQSTPSKDSFHPSS. A compositionally biased stretch (polar residues) spans 436-449; the sequence is PQSTPSKDSFHPSS.

Homodimer. Heterodimer; efficient DNA binding requires dimerization with another bHLH protein. Interacts with ARNT; the heterodimer ARNT:AHR binds to core DNA sequence 5'-TGCGTG-3' within the dioxin response element (DRE) of target gene promoters and activates their transcription. Binds MYBBP1A. Interacts with coactivators including SRC-1, RIP140 and NOCA7, and with the corepressor SMRT. Interacts with NEDD8 and IVNS1ABP. Interacts with BMAL1. Interacts with HSP90AB1. Interacts with TIPARP; leading to mono-ADP-ribosylation of AHR and subsequent inhibition of AHR. Mono-ADP-ribosylated, leading to inhibit transcription activator activity of AHR.

The protein localises to the cytoplasm. It is found in the nucleus. Its function is as follows. Ligand-activated transcription factor that enables cells to adapt to changing conditions by sensing compounds from the environment, diet, microbiome and cellular metabolism, and which plays important roles in development, immunity and cancer. Upon ligand binding, translocates into the nucleus, where it heterodimerizes with ARNT and induces transcription by binding to xenobiotic response elements (XRE). Regulates a variety of biological processes, including angiogenesis, hematopoiesis, drug and lipid metabolism, cell motility and immune modulation. Xenobiotics can act as ligands: upon xenobiotic-binding, activates the expression of multiple phase I and II xenobiotic chemical metabolizing enzyme genes (such as the CYP1A1 gene). Mediates biochemical and toxic effects of halogenated aromatic hydrocarbons. Next to xenobiotics, natural ligands derived from plants, microbiota, and endogenous metabolism are potent AHR agonists. Tryptophan (Trp) derivatives constitute an important class of endogenous AHR ligands. Acts as a negative regulator of anti-tumor immunity: indoles and kynurenic acid generated by Trp catabolism act as ligand and activate AHR, thereby promoting AHR-driven cancer cell motility and suppressing adaptive immunity. Regulates the circadian clock by inhibiting the basal and circadian expression of the core circadian component PER1. Inhibits PER1 by repressing the CLOCK-BMAL1 heterodimer mediated transcriptional activation of PER1. The heterodimer ARNT:AHR binds to core DNA sequence 5'-TGCGTG-3' within the dioxin response element (DRE) of target gene promoters and activates their transcription. This chain is Aryl hydrocarbon receptor (Ahr), found in Mus musculus castaneus (Southeastern Asian house mouse).